The following is a 551-amino-acid chain: Hedycaryol synthase TPS20CT (551 aa).

(2E,6E)-farnesyl diphosphate contacts are provided by arginine 266, aspartate 303, aspartate 307, arginine 444, and aspartate 447. Aspartate 303 and aspartate 307 together coordinate Mg(2+). The DDXXD motif motif lies at 303–307; sequence DDIYD. Mg(2+) is bound by residues aspartate 447, serine 451, and glutamate 455.

The protein belongs to the terpene synthase family. Tpsb subfamily. It depends on Mg(2+) as a cofactor. The cofactor is Mn(2+). Highly expressed in glandular trichomes.

The catalysed reaction is (2E,6E)-farnesyl diphosphate + H2O = (2E,6E)-hedycaryol + diphosphate. Its pathway is secondary metabolite biosynthesis; terpenoid biosynthesis. Functionally, involved in sesquiterpene olefins biosynthesis, constituants of cannabinoids and terpenoids-rich resins. Catalyzes primarily the conversion of (2E)-farnesyl diphosphate to hedycaryol, which is spontaneously converted to elemol as a thermal degradation product. The protein is Hedycaryol synthase TPS20CT of Cannabis sativa (Hemp).